The sequence spans 352 residues: UDP-N-acetylglucosamine--N-acetylmuramyl-(pentapeptide) pyrophosphoryl-undecaprenol N-acetylglucosamine transferase 3 (352 aa).

Residues 11-13 (SAG), arginine 164, serine 194, and glutamine 289 each bind UDP-N-acetyl-alpha-D-glucosamine.

The protein belongs to the glycosyltransferase 28 family. MurG subfamily.

The protein localises to the cell membrane. It catalyses the reaction di-trans,octa-cis-undecaprenyl diphospho-N-acetyl-alpha-D-muramoyl-L-alanyl-D-glutamyl-meso-2,6-diaminopimeloyl-D-alanyl-D-alanine + UDP-N-acetyl-alpha-D-glucosamine = di-trans,octa-cis-undecaprenyl diphospho-[N-acetyl-alpha-D-glucosaminyl-(1-&gt;4)]-N-acetyl-alpha-D-muramoyl-L-alanyl-D-glutamyl-meso-2,6-diaminopimeloyl-D-alanyl-D-alanine + UDP + H(+). Its pathway is cell wall biogenesis; peptidoglycan biosynthesis. Functionally, cell wall formation. Catalyzes the transfer of a GlcNAc subunit on undecaprenyl-pyrophosphoryl-MurNAc-pentapeptide (lipid intermediate I) to form undecaprenyl-pyrophosphoryl-MurNAc-(pentapeptide)GlcNAc (lipid intermediate II). This is UDP-N-acetylglucosamine--N-acetylmuramyl-(pentapeptide) pyrophosphoryl-undecaprenol N-acetylglucosamine transferase 3 from Bacillus thuringiensis (strain Al Hakam).